Consider the following 843-residue polypeptide: Receptor-like serine/threonine-protein kinase SD1-7 (843 aa).

The N-terminal stretch at M1–S31 is a signal peptide. The Bulb-type lectin domain maps to A32 to D151. The Extracellular segment spans residues A32 to K435. Residues N41, N92, N116, N236, and N251 are each glycosylated (N-linked (GlcNAc...) asparagine). Positions P286–Q322 constitute an EGF-like; atypical domain. 4 cysteine pairs are disulfide-bonded: C290/C302, C296/C310, C372/C397, and C376/C382. Residues C341 to A422 form the PAN domain. The N-linked (GlcNAc...) asparagine glycan is linked to N381. The helical transmembrane segment at I436–F456 threads the bilayer. The Cytoplasmic segment spans residues W457 to R843. Residues F519–F809 enclose the Protein kinase domain. ATP contacts are provided by residues L525–V533 and K547. Phosphoserine is present on S553. A caM-binding region spans residues T608–I625. D644 functions as the Proton acceptor in the catalytic mechanism. 2 positions are modified to phosphoserine: S648 and S661. Position 678 is a phosphothreonine (T678). Residue S820 is modified to Phosphoserine.

Belongs to the protein kinase superfamily. Ser/Thr protein kinase family. In terms of assembly, interacts with PUB9, PUB13, PUB14 and PUB38. Autophosphorylated on serine and threonine residues. In terms of tissue distribution, mostly expressed in leaves, and, to a lower extent, in stems and flower buds.

The protein localises to the cell membrane. The catalysed reaction is L-seryl-[protein] + ATP = O-phospho-L-seryl-[protein] + ADP + H(+). The enzyme catalyses L-threonyl-[protein] + ATP = O-phospho-L-threonyl-[protein] + ADP + H(+). Involved in the regulation of cellular expansion and differentiation. Mediates subcellular relocalization of PUB9 from nucleus to plasma membrane in a protein-phosphorylation-dependent manner. May be involved in the abscisic acid-mediated signaling pathway, at least during germination. This is Receptor-like serine/threonine-protein kinase SD1-7 (SD17) from Arabidopsis thaliana (Mouse-ear cress).